Here is a 755-residue protein sequence, read N- to C-terminus: Xaa-Pro dipeptidyl-peptidase (755 aa).

Residues Ser-348, Asp-468, and His-498 each act as charge relay system in the active site.

Belongs to the peptidase S15 family. In terms of assembly, homodimer.

The protein localises to the cytoplasm. The catalysed reaction is Hydrolyzes Xaa-Pro-|- bonds to release unblocked, N-terminal dipeptides from substrates including Ala-Pro-|-p-nitroanilide and (sequentially) Tyr-Pro-|-Phe-Pro-|-Gly-Pro-|-Ile.. Removes N-terminal dipeptides sequentially from polypeptides having unsubstituted N-termini provided that the penultimate residue is proline. The chain is Xaa-Pro dipeptidyl-peptidase from Streptococcus thermophilus (strain CNRZ 1066).